A 239-amino-acid polypeptide reads, in one-letter code: uncharacterized protein (239 aa).

The next 4 membrane-spanning stretches (helical) occupy residues 9–29 (LAIY…SQII), 65–85 (IIYL…YLFI), 94–114 (IILI…TFVV), and 167–187 (IYFA…MHWI).

It localises to the cell membrane. This is an uncharacterized protein from Methanocaldococcus jannaschii (strain ATCC 43067 / DSM 2661 / JAL-1 / JCM 10045 / NBRC 100440) (Methanococcus jannaschii).